The sequence spans 273 residues: 3-methyl-2-oxobutanoate hydroxymethyltransferase (273 aa).

Asp53 and Asp92 together coordinate Mg(2+). Residues Asp53–Ser54, Asp92, and Lys122 each bind 3-methyl-2-oxobutanoate. Glu124 contributes to the Mg(2+) binding site. The active-site Proton acceptor is the Glu191.

It belongs to the PanB family. As to quaternary structure, homodecamer; pentamer of dimers. Requires Mg(2+) as cofactor.

Its subcellular location is the cytoplasm. It catalyses the reaction 3-methyl-2-oxobutanoate + (6R)-5,10-methylene-5,6,7,8-tetrahydrofolate + H2O = 2-dehydropantoate + (6S)-5,6,7,8-tetrahydrofolate. Its pathway is cofactor biosynthesis; (R)-pantothenate biosynthesis; (R)-pantoate from 3-methyl-2-oxobutanoate: step 1/2. In terms of biological role, catalyzes the reversible reaction in which hydroxymethyl group from 5,10-methylenetetrahydrofolate is transferred onto alpha-ketoisovalerate to form ketopantoate. This Parabacteroides distasonis (strain ATCC 8503 / DSM 20701 / CIP 104284 / JCM 5825 / NCTC 11152) protein is 3-methyl-2-oxobutanoate hydroxymethyltransferase.